We begin with the raw amino-acid sequence, 313 residues long: MTDLDSSLPPSVRTAGDSWTITELVGATALGVAAARAAETAGPDPLIRDEFAGLLVSSASPAWARLADPELSWLDDDPHGKRAHRVGIDYQAVRTHYFDEYFDGALRAGIRQVVILAAGLDSRAYRLNWPAGTTVYEIDQPKVLEYKTETLQRHGATPAAVRRPVPVDLRDDWPAALTAAGFQAARPTAWLAEGLLPYLPSDAQDRLFEMVTALSAAGSQVAVEVFGMNSRSNAQRWLRMRERLGLDVNVAALTYHEPDRSDAAAWLARHGWRVHSVDNRDEMARLGRPVPEDLSDEAVRSTLLRAHLGGSTG.

Residues D139 and 168–169 (DL) each bind S-adenosyl-L-methionine.

It belongs to the UPF0677 family.

Exhibits S-adenosyl-L-methionine-dependent methyltransferase activity. The polypeptide is Putative S-adenosyl-L-methionine-dependent methyltransferase MAP_3563 (Mycolicibacterium paratuberculosis (strain ATCC BAA-968 / K-10) (Mycobacterium paratuberculosis)).